The sequence spans 369 residues: 3 beta-hydroxysteroid dehydrogenase type 7 (369 aa).

Y159 serves as the catalytic Proton acceptor. K163 provides a ligand contact to NAD(+). A run of 2 helical transmembrane segments spans residues 289–309 and 311–331; these read LLPY…QWLL and PLVL…NTTF.

It belongs to the 3-beta-HSD family.

It is found in the endoplasmic reticulum membrane. The catalysed reaction is 7alpha-hydroxycholesterol + NAD(+) = 7alpha-hydroxycholest-4-en-3-one + NADH + H(+). It catalyses the reaction 7alpha,25-dihydroxycholesterol + NAD(+) = 7alpha,25-dihydroxy-4-cholesten-3-one + NADH + H(+). It carries out the reaction (25R)-cholest-5-en-3beta,7alpha,26-triol + NAD(+) = (25R)-7alpha,26-dihydroxycholest-4-en-3-one + NADH + H(+). The enzyme catalyses (24S)-7alpha-dihydroxycholesterol + NAD(+) = (24S)-7alpha,24-dihydroxycholest-4-en-3-one + NADH + H(+). It functions in the pathway lipid metabolism; steroid biosynthesis. Its function is as follows. The 3-beta-HSD enzymatic system plays a crucial role in the biosynthesis of all classes of hormonal steroids. HSD VII is active against four 7-alpha-hydroxylated sterols. Does not metabolize several different C(19/21) steroids as substrates. Involved in bile acid synthesis. Plays a key role in cell positioning and movement in lymphoid tissues by mediating degradation of 7-alpha,25-dihydroxycholesterol (7-alpha,25-OHC): 7-alpha,25-OHC acts as a ligand for the G protein-coupled receptor GPR183/EBI2, a chemotactic receptor for a number of lymphoid cells. The polypeptide is 3 beta-hydroxysteroid dehydrogenase type 7 (Homo sapiens (Human)).